We begin with the raw amino-acid sequence, 77 residues long: Defensin-like protein (77 aa).

Residues 1-30 form the signal peptide; sequence MERGMRLFSSLVLVLLLVTATEMGPKVAEA. Cystine bridges form between Cys-33–Cys-77, Cys-44–Cys-64, Cys-50–Cys-71, and Cys-54–Cys-73.

It belongs to the DEFL family.

The protein resides in the secreted. This chain is Defensin-like protein, found in Nelumbo nucifera (Sacred lotus).